The following is a 414-amino-acid chain: L-cysteine:1D-myo-inositol 2-amino-2-deoxy-alpha-D-glucopyranoside ligase (414 aa).

Zn(2+) is bound at residue C44. L-cysteinyl-5'-AMP is bound by residues 44–47, T59, and 82–84; these read CGIT and NIT. The short motif at 46-56 is the 'HIGH' region element; it reads ITPYDSTHLGH. Residues 188-193 carry the 'ERGGDP' region motif; sequence ERGGDP. Residue W228 participates in L-cysteinyl-5'-AMP binding. C232 provides a ligand contact to Zn(2+). 250–252 serves as a coordination point for L-cysteinyl-5'-AMP; sequence GSD. Position 257 (H257) interacts with Zn(2+). An L-cysteinyl-5'-AMP-binding site is contributed by I284. The short motif at 290 to 294 is the 'KMSKS' region element; that stretch reads KMSKS.

Belongs to the class-I aminoacyl-tRNA synthetase family. MshC subfamily. Monomer. Requires Zn(2+) as cofactor.

It carries out the reaction 1D-myo-inositol 2-amino-2-deoxy-alpha-D-glucopyranoside + L-cysteine + ATP = 1D-myo-inositol 2-(L-cysteinylamino)-2-deoxy-alpha-D-glucopyranoside + AMP + diphosphate + H(+). Catalyzes the ATP-dependent condensation of GlcN-Ins and L-cysteine to form L-Cys-GlcN-Ins. The sequence is that of L-cysteine:1D-myo-inositol 2-amino-2-deoxy-alpha-D-glucopyranoside ligase (mshC) from Corynebacterium diphtheriae (strain ATCC 700971 / NCTC 13129 / Biotype gravis).